Consider the following 89-residue polypeptide: Small ribosomal subunit protein uS15 (89 aa).

This sequence belongs to the universal ribosomal protein uS15 family. In terms of assembly, part of the 30S ribosomal subunit. Forms a bridge to the 50S subunit in the 70S ribosome, contacting the 23S rRNA.

Functionally, one of the primary rRNA binding proteins, it binds directly to 16S rRNA where it helps nucleate assembly of the platform of the 30S subunit by binding and bridging several RNA helices of the 16S rRNA. In terms of biological role, forms an intersubunit bridge (bridge B4) with the 23S rRNA of the 50S subunit in the ribosome. This is Small ribosomal subunit protein uS15 from Desulforudis audaxviator (strain MP104C).